Reading from the N-terminus, the 227-residue chain is Cytochrome c oxidase subunit 2 (227 aa).

Over 1–14 the chain is Mitochondrial intermembrane; that stretch reads MAHPVQLGLQDATS. A helical membrane pass occupies residues 15-45; sequence PVMEELVTFHDHALMAMFLISFLILYALSAT. The Mitochondrial matrix portion of the chain corresponds to 46–59; that stretch reads LTTKLTNTNITDAQ. The helical transmembrane segment at 60–87 threads the bilayer; the sequence is EMETIWTILPAVILVLIALPSLRILYMT. Over 88–227 the chain is Mitochondrial intermembrane; the sequence is DEINNPSFTI…IFEMGPVFTL (140 aa). The Cu cation site is built by His-161, Cys-196, Glu-198, Cys-200, His-204, and Met-207. Position 198 (Glu-198) interacts with Mg(2+).

The protein belongs to the cytochrome c oxidase subunit 2 family. As to quaternary structure, component of the cytochrome c oxidase (complex IV, CIV), a multisubunit enzyme composed of 14 subunits. The complex is composed of a catalytic core of 3 subunits MT-CO1, MT-CO2 and MT-CO3, encoded in the mitochondrial DNA, and 11 supernumerary subunits COX4I, COX5A, COX5B, COX6A, COX6B, COX6C, COX7A, COX7B, COX7C, COX8 and NDUFA4, which are encoded in the nuclear genome. The complex exists as a monomer or a dimer and forms supercomplexes (SCs) in the inner mitochondrial membrane with NADH-ubiquinone oxidoreductase (complex I, CI) and ubiquinol-cytochrome c oxidoreductase (cytochrome b-c1 complex, complex III, CIII), resulting in different assemblies (supercomplex SCI(1)III(2)IV(1) and megacomplex MCI(2)III(2)IV(2)). Found in a complex with TMEM177, COA6, COX18, COX20, SCO1 and SCO2. Interacts with TMEM177 in a COX20-dependent manner. Interacts with COX20. Interacts with COX16. Cu cation serves as cofactor.

The protein localises to the mitochondrion inner membrane. It carries out the reaction 4 Fe(II)-[cytochrome c] + O2 + 8 H(+)(in) = 4 Fe(III)-[cytochrome c] + 2 H2O + 4 H(+)(out). Functionally, component of the cytochrome c oxidase, the last enzyme in the mitochondrial electron transport chain which drives oxidative phosphorylation. The respiratory chain contains 3 multisubunit complexes succinate dehydrogenase (complex II, CII), ubiquinol-cytochrome c oxidoreductase (cytochrome b-c1 complex, complex III, CIII) and cytochrome c oxidase (complex IV, CIV), that cooperate to transfer electrons derived from NADH and succinate to molecular oxygen, creating an electrochemical gradient over the inner membrane that drives transmembrane transport and the ATP synthase. Cytochrome c oxidase is the component of the respiratory chain that catalyzes the reduction of oxygen to water. Electrons originating from reduced cytochrome c in the intermembrane space (IMS) are transferred via the dinuclear copper A center (CU(A)) of subunit 2 and heme A of subunit 1 to the active site in subunit 1, a binuclear center (BNC) formed by heme A3 and copper B (CU(B)). The BNC reduces molecular oxygen to 2 water molecules using 4 electrons from cytochrome c in the IMS and 4 protons from the mitochondrial matrix. The protein is Cytochrome c oxidase subunit 2 (MT-CO2) of Theropithecus gelada (Gelada baboon).